We begin with the raw amino-acid sequence, 1032 residues long: Argonaute protein hrde-1 (1032 aa).

Disordered regions lie at residues 1 to 51 and 298 to 375; these read MADL…PIGR and KLSE…YSPS. The interval 1 to 551 is required to recruit the small-RNA amplification machinery to gene targets and promote gene silencing; that stretch reads MADLLDKIMG…IQMTAKLLPP (551 aa). Positions 18-33 are enriched in basic and acidic residues; sequence PKRDNRMNQDKDEPTS. Residues 303–313 are compositionally biased toward gly residues; that stretch reads KGGGGGRGGYG. Basic and acidic residues-rich tracts occupy residues 315 to 335 and 343 to 364; these read SDSR…RDFR and GNDR…RRDS. The 106-residue stretch at 376–481 folds into the PAZ domain; that stretch reads DAAELEHAFG…FPMELLRIAP (106 aa). The Piwi domain maps to 650–977; that stretch reads DILVGIAREK…LAKRGRNNYK (328 aa).

The protein belongs to the argonaute family. WAGO subfamily. Expressed in the nuclei of male and female germ cells.

The protein resides in the cytoplasm. It is found in the cytoplasmic ribonucleoprotein granule. The protein localises to the nucleus. Argonaute protein which is involved in the endogenous small interfering RNA (endo-siRNA) pathway and is required for RNA-mediated gene silencing (RNAi) in the germline. Interacts with secondary 22G-RNAs in an hrde-2-dependent manner; 22G-RNAs are RNA-dependent RNA polymerase-derived endo-siRNAs, typically 22 nucleotides in length with a 5'-guanosine residue. Plays a key role in transgenerational epigenetic inheritance and germline immortality. May be involved in transgenerational gene silencing both by inducing subnuclear-co-localization of target genes into heterochromatin and by activation of small RNA amplification in the nuage. This Caenorhabditis elegans protein is Argonaute protein hrde-1.